Here is a 350-residue protein sequence, read N- to C-terminus: Very-long-chain 3-oxoacyl-CoA reductase (350 aa).

The chain crosses the membrane as a helical span at residues 20 to 40; sequence ALLFSLLFGVFKLTTFTLRFA. The NADP(+) site is built by V66, D120, N147, Y221, K225, V254, and S256. The active-site Proton donor is the Y221. The active-site Lowers pKa of active site Tyr is K225.

This sequence belongs to the short-chain dehydrogenases/reductases (SDR) family.

It localises to the endoplasmic reticulum membrane. The enzyme catalyses a very-long-chain (3R)-3-hydroxyacyl-CoA + NADP(+) = a very-long-chain 3-oxoacyl-CoA + NADPH + H(+). The protein operates within lipid metabolism; fatty acid biosynthesis. Its function is as follows. Component of the microsomal membrane bound fatty acid elongation system, which produces the 26-carbon very long-chain fatty acids (VLCFA) from palmitate. Catalyzes the reduction of the 3-ketoacyl-CoA intermediate that is formed in each cycle of fatty acid elongation. VLCFAs serve as precursors for ceramide and sphingolipids. This Lodderomyces elongisporus (strain ATCC 11503 / CBS 2605 / JCM 1781 / NBRC 1676 / NRRL YB-4239) (Yeast) protein is Very-long-chain 3-oxoacyl-CoA reductase.